A 1111-amino-acid polypeptide reads, in one-letter code: uncharacterized protein (1111 aa).

Residues 1 to 31 (MIRKLMKIPPFFTALFASAMFTLSVSQGVLA) form the signal peptide. 11 consecutive transmembrane segments (helical) span residues 490-510 (LPYL…IFKF), 538-558 (LALL…LAVC), 572-592 (FWHW…WISL), 620-640 (IIVV…TDAG), 644-664 (DVLG…IIAP), 694-714 (IPVG…LNLI), 797-817 (FIWT…VTVV), 840-860 (SITL…YVLV), 885-905 (ITTL…FATL), 922-942 (GLGF…ILLF), and 1003-1023 (LVIS…QLLL).

This sequence belongs to the MscS (TC 1.A.23) family.

Its subcellular location is the cell membrane. This is an uncharacterized protein from Haemophilus influenzae (strain ATCC 51907 / DSM 11121 / KW20 / Rd).